A 388-amino-acid polypeptide reads, in one-letter code: 3beta-hydroxysteroid dehydrogenase dhs-16 (388 aa).

A helical membrane pass occupies residues 2–22 (LELIYILPLLCFVYFLFRRFV). The active-site Proton acceptor is Tyr188. The next 2 membrane-spanning stretches (helical) occupy residues 300 to 320 (AIFM…WILA) and 346 to 366 (IQWI…TIFF).

Belongs to the short-chain dehydrogenases/reductases (SDR) family. Strongly expressed in the hypodermis and posterior pharyngeal bulb and in a number of unidentified neurons of the head and tail.

It is found in the membrane. The enzyme catalyses lathosterol + NAD(+) = 5alpha-cholest-7-en-3-one + NADH + H(+). It participates in steroid hormone biosynthesis; dafachronic acid biosynthesis. Its function is as follows. 3beta-hydroxysteroid dehydrogenase that converts 3beta-hydroxysteroids to 3-ketosteroids, an essential step in the production of dafachronic acids from cholesterol. Catalyzes the dehydrogenation of lathosterol (5alpha-cholest-7-en-3beta-ol) to lathosterone (5alpha-cholest-7-en-3-one), a step required for maximal biosynthesis of Delta(7)-dafachronic acid. Dafachronic acids act as ligands and bind directly to the nuclear hormone receptor (NHR) daf-12, suppressing dauer formation and inducing reproductive growth, they can also regulate C.elegans lifespan. This chain is 3beta-hydroxysteroid dehydrogenase dhs-16 (dhs-16), found in Caenorhabditis elegans.